Consider the following 202-residue polypeptide: LexA repressor (202 aa).

A DNA-binding region (H-T-H motif) is located at residues 28–48 (RAEIAQELGFKSPNAAEEHLK). Active-site for autocatalytic cleavage activity residues include Ser123 and Lys160.

This sequence belongs to the peptidase S24 family. As to quaternary structure, homodimer.

The catalysed reaction is Hydrolysis of Ala-|-Gly bond in repressor LexA.. Its function is as follows. Represses a number of genes involved in the response to DNA damage (SOS response), including recA and lexA. In the presence of single-stranded DNA, RecA interacts with LexA causing an autocatalytic cleavage which disrupts the DNA-binding part of LexA, leading to derepression of the SOS regulon and eventually DNA repair. The protein is LexA repressor of Pseudomonas putida (Arthrobacter siderocapsulatus).